Here is a 353-residue protein sequence, read N- to C-terminus: MSFDAEKQLAIAAVRRASYLTEKVFNQLIKEKSAAGALTKDDKSPVTIGDFGAQAIVISMLKDAFPNDPIVGEEDSDFLRENTQTCSRVWELVQETIQHATEYKELGQIKSAEEMMSIIDQGSYHGGRNGRMWTLDPIDGTKGFLRGAQYAICLALIENGKPVVSAIGCPNLPYDFNQPETSPKGIIMSAVRNHGCFQYSLHNEKLEPVQVHMQDVQNTKDSKFCEGVEAGHSMQGTQEEIAKYLGITRGPTKMDSQAKYASLARGDGDIYLRLPTKMTFEEKIWDHAGGSLLVEEAGGVVSDMFGKPLDFGVGRTLKNNNGVIAAYKGIFEKVIEATAAVTSKDPHFQKVAQ.

The active-site Proton acceptor is the Asp-50. Mg(2+) contacts are provided by Glu-73, Asp-136, Ile-138, and Asp-139. Thr-141 acts as the Proton acceptor in catalysis. Adenosine 3',5'-bisphosphate contacts are provided by Thr-141, His-232, Ser-256, Lys-259, Arg-273, and Asp-286. 5 residues coordinate AMP: His-232, Ser-256, Lys-259, Arg-273, and Asp-286. Residue Asp-286 coordinates Mg(2+).

It belongs to the inositol monophosphatase superfamily. Mg(2+) serves as cofactor.

The enzyme catalyses 3'-phosphoadenylyl sulfate + H2O = adenosine 5'-phosphosulfate + phosphate. The catalysed reaction is adenosine 3',5'-bisphosphate + H2O = AMP + phosphate. It catalyses the reaction adenosine 2',5'-bisphosphate + H2O = AMP + phosphate. It carries out the reaction 1D-myo-inositol 1,4-bisphosphate + H2O = 1D-myo-inositol 4-phosphate + phosphate. The enzyme catalyses 1D-myo-inositol 1,3,4-trisphosphate + H2O = 1D-myo-inositol 3,4-bisphosphate + phosphate. Inhibited by Li(+) and Na(+). Phosphatase that converts adenosine 3'-phosphate 5'-phosphosulfate (PAPS) to adenosine 5'-phosphosulfate (APS) and 3'(2')-phosphoadenosine 5'-phosphate (PAP) to AMP. May regulate the flux of sulfur in the sulfur-activation pathway by converting PAPS to APS. Is also able to hydrolyze inositol 1,4-bisphosphate (Ins(1,4)P2) and inositol 1,3,4-trisphosphate (Ins(1,3,4)P3), but is not active on inositol 1,4,5-trisphosphate, inositol 1-phosphate, fructose 1,6-bisphosphate, AMP and ATP. Its function is as follows. Confers resistance to lithium. The polypeptide is 3'(2'),5'-bisphosphate nucleotidase (tol1) (Schizosaccharomyces pombe (strain 972 / ATCC 24843) (Fission yeast)).